The sequence spans 269 residues: Flagellar brake protein YcgR (269 aa).

In terms of domain architecture, PilZ spans 134–254 (QRRNFYRVTT…SRLLIQRYIT (121 aa)).

It belongs to the YcgR family. In terms of assembly, monomer. Interacts with the flagellar basal bodies.

The protein resides in the bacterial flagellum basal body. In terms of biological role, acts as a flagellar brake, regulating swimming and swarming in a bis-(3'-5') cyclic diguanylic acid (c-di-GMP)-dependent manner. Binds 1 c-di-GMP dimer per subunit. Increasing levels of c-di-GMP lead to decreased motility. This is Flagellar brake protein YcgR from Nitrosomonas eutropha (strain DSM 101675 / C91 / Nm57).